A 453-amino-acid chain; its full sequence is Tubulin alpha-1 chain (453 aa).

Gln-11, Glu-71, Gly-144, Thr-145, Thr-179, Asn-206, and Asn-228 together coordinate GTP. Residue Glu-71 participates in Mg(2+) binding. The active site involves Glu-254. Residues 433–453 are disordered; the sequence is EEVGAETADGDGEEEEFGEEY.

This sequence belongs to the tubulin family. Dimer of alpha and beta chains. A typical microtubule is a hollow water-filled tube with an outer diameter of 25 nm and an inner diameter of 15 nM. Alpha-beta heterodimers associate head-to-tail to form protofilaments running lengthwise along the microtubule wall with the beta-tubulin subunit facing the microtubule plus end conferring a structural polarity. Microtubules usually have 13 protofilaments but different protofilament numbers can be found in some organisms and specialized cells. It depends on Mg(2+) as a cofactor. Undergoes a tyrosination/detyrosination cycle, the cyclic removal and re-addition of a C-terminal tyrosine residue by the enzymes tubulin tyrosine carboxypeptidase (TTCP) and tubulin tyrosine ligase (TTL), respectively.

The protein localises to the cytoplasm. It localises to the cytoskeleton. It catalyses the reaction GTP + H2O = GDP + phosphate + H(+). Tubulin is the major constituent of microtubules, a cylinder consisting of laterally associated linear protofilaments composed of alpha- and beta-tubulin heterodimers. Microtubules grow by the addition of GTP-tubulin dimers to the microtubule end, where a stabilizing cap forms. Below the cap, tubulin dimers are in GDP-bound state, owing to GTPase activity of alpha-tubulin. This Pelvetia fastigiata (Brown alga) protein is Tubulin alpha-1 chain (TUBA1).